The sequence spans 765 residues: ATP-dependent RNA helicase DBP4 (765 aa).

The short motif at 48 to 76 (SQFSDLPITENTLKGLKEATFVSLTDIQK) is the Q motif element. Residues 79-253 (IPIALKGEDL…RLSLTNPNKI (175 aa)) form the Helicase ATP-binding domain. 92–99 (ARTGSGKT) is a binding site for ATP. The DEAD box signature appears at 201–204 (DEAD). A Helicase C-terminal domain is found at 267–439 (SLEQYYVKVP…SIRPQLQSLC (173 aa)). 2 stretches are compositionally biased toward basic and acidic residues: residues 655 to 668 (KISD…ERQK) and 720 to 738 (PVSK…KSKN). Residues 655–765 (KISDITDKEV…ESLTARLIGN (111 aa)) form a disordered region. The segment covering 744 to 756 (VEYDEPETLEDLE) has biased composition (acidic residues).

Belongs to the DEAD box helicase family. DDX10/DBP4 subfamily. Interacts with the U3 and U14 snoRNAs. Associates with pre-ribosomal complexes.

It is found in the nucleus. Its subcellular location is the nucleolus. The catalysed reaction is ATP + H2O = ADP + phosphate + H(+). Functionally, ATP-dependent RNA helicase required for ribosome biogenesis. Involved in the release of U14 snoRNA in pre-ribosomal complexes. Required for pre-rRNA cleavage at site A2. This chain is ATP-dependent RNA helicase DBP4 (DBP4), found in Candida albicans (strain SC5314 / ATCC MYA-2876) (Yeast).